Consider the following 33-residue polypeptide: Mu-theraphotoxin-Osp1a (33 aa).

3 cysteine pairs are disulfide-bonded: Cys-2/Cys-17, Cys-9/Cys-22, and Cys-16/Cys-29.

Belongs to the neurotoxin 10 (Hwtx-1) family. Expressed by the venom gland.

The protein localises to the secreted. Its function is as follows. Voltage-gated sodium channel Nav1.7/SCN9A inhibitor. The protein is Mu-theraphotoxin-Osp1a of Orphnaecus sp. (strain Sibaliw/Philippines) (Tarantula spider).